Here is a 948-residue protein sequence, read N- to C-terminus: Phosphoenolpyruvate carboxylase (948 aa).

Residues His-138 and Lys-610 contribute to the active site.

This sequence belongs to the PEPCase type 1 family. It depends on Mg(2+) as a cofactor.

The enzyme catalyses oxaloacetate + phosphate = phosphoenolpyruvate + hydrogencarbonate. Its function is as follows. Forms oxaloacetate, a four-carbon dicarboxylic acid source for the tricarboxylic acid cycle. The chain is Phosphoenolpyruvate carboxylase from Streptococcus gordonii (strain Challis / ATCC 35105 / BCRC 15272 / CH1 / DL1 / V288).